A 299-amino-acid chain; its full sequence is Taste receptor type 2 member 1 (299 aa).

Topologically, residues 1 to 9 are extracellular; it reads MLESHLIIH. Residues 10–30 form a helical membrane-spanning segment; the sequence is FLLAVIQFLLGTFTNGIIVVV. Residues 31-55 lie on the Cytoplasmic side of the membrane; sequence NGIDLIKHRKMAPLDLLLSCLAVSR. A helical membrane pass occupies residues 56–76; that stretch reads IFLQLFIFYVNVIVIFFIEFI. Over 77–81 the chain is Extracellular; sequence MCSEN. A helical transmembrane segment spans residues 82 to 102; sequence CAILLFINELELWLATWLGVF. Topologically, residues 103–124 are cytoplasmic; that stretch reads YCAKVASVPHPLFIWLKMKISK. A helical transmembrane segment spans residues 125-145; that stretch reads LVPWMILGSLLYVSMTCVFHS. Residues 146–178 are Extracellular-facing; sequence KYAGFMVPYFLRNFFSQNATIQKEDTPAIQIFS. Asn-163 carries N-linked (GlcNAc...) asparagine glycosylation. A helical membrane pass occupies residues 179-199; it reads FVAEFLVPLLIFLVAVLLLIF. Topologically, residues 200-222 are cytoplasmic; it reads SLGRHTRQMRNTVAGSRVPGRGA. Residues 223–243 traverse the membrane as a helical segment; that stretch reads PISALLSILSFVILYFSHCMI. The Extracellular segment spans residues 244 to 257; it reads KVFLSSLKFHVRSF. Residues 258 to 278 form a helical membrane-spanning segment; sequence ILPFFILVIGIYPSGHSLILI. The Cytoplasmic segment spans residues 279-299; that stretch reads LGNXKLKQNAKKFLLHSKCCQ.

It belongs to the G-protein coupled receptor T2R family.

It localises to the membrane. In terms of biological role, receptor that may play a role in the perception of bitterness and is gustducin-linked. May play a role in sensing the chemical composition of the gastrointestinal content. The activity of this receptor may stimulate alpha gustducin, mediate PLC-beta-2 activation and lead to the gating of TRPM5. The sequence is that of Taste receptor type 2 member 1 (TAS2R1) from Pongo pygmaeus (Bornean orangutan).